Consider the following 342-residue polypeptide: Dihydroorotate dehydrogenase (quinone) (342 aa).

Residues 65 to 69 (AGLDK) and Thr-89 contribute to the FMN site. Position 69 (Lys-69) interacts with substrate. Substrate is bound at residue 114–118 (NRMGF). 2 residues coordinate FMN: Asn-142 and Asn-175. Residue Asn-175 participates in substrate binding. The active-site Nucleophile is Ser-178. Asn-180 is a binding site for substrate. The FMN site is built by Lys-220 and Thr-248. 249–250 (NT) contacts substrate. Residues Gly-271, Gly-300, and 321-322 (YT) each bind FMN.

It belongs to the dihydroorotate dehydrogenase family. Type 2 subfamily. As to quaternary structure, monomer. It depends on FMN as a cofactor.

It localises to the cell membrane. It catalyses the reaction (S)-dihydroorotate + a quinone = orotate + a quinol. It participates in pyrimidine metabolism; UMP biosynthesis via de novo pathway; orotate from (S)-dihydroorotate (quinone route): step 1/1. Functionally, catalyzes the conversion of dihydroorotate to orotate with quinone as electron acceptor. The sequence is that of Dihydroorotate dehydrogenase (quinone) from Burkholderia pseudomallei (strain 668).